A 550-amino-acid chain; its full sequence is Hydroxylamine reductase (550 aa).

[2Fe-2S] cluster contacts are provided by Cys3, Cys6, Cys18, and Cys25. Residues His249, Glu273, Cys317, Cys405, Cys433, Cys458, Glu492, and Lys494 each contribute to the hybrid [4Fe-2O-2S] cluster site. At Cys405 the chain carries Cysteine persulfide.

This sequence belongs to the HCP family. The cofactor is [2Fe-2S] cluster. Hybrid [4Fe-2O-2S] cluster is required as a cofactor.

The protein localises to the cytoplasm. The enzyme catalyses A + NH4(+) + H2O = hydroxylamine + AH2 + H(+). Functionally, catalyzes the reduction of hydroxylamine to form NH(3) and H(2)O. The sequence is that of Hydroxylamine reductase from Pectobacterium atrosepticum (strain SCRI 1043 / ATCC BAA-672) (Erwinia carotovora subsp. atroseptica).